Reading from the N-terminus, the 843-residue chain is Tetratricopeptide repeat protein 7B (843 aa).

Residues 97–131 (QESNLIMAKLNYVEGDYKEALNIYARVGLDDLPLT) form a TPR 1 repeat. A phosphoserine mark is found at Ser-160 and Ser-202. TPR repeat units lie at residues 219 to 252 (ETGL…VETR), 363 to 396 (SVVY…AFEE), 397 to 430 (FHLW…KPDD), 479 to 514 (TYSL…SPTD), 516 to 548 (QAAF…QGDD), and 549 to 582 (ANSL…YPEN). Residues Ser-625, Ser-629, Ser-630, Ser-673, Ser-677, Ser-678, and Ser-681 each carry the phosphoserine modification. TPR repeat units follow at residues 696–729 (AQIW…FPMS), 730–763 (HNVL…SPTH), 765–797 (KSMQ…NSTA), and 798–831 (HEVW…EASS).

In terms of assembly, component of a phosphatidylinositol 4-kinase (PI4K) complex, composed of PI4KA, EFR3 (EFR3A or EFR3B), TTC7 (TTC7A or TTC7B) and HYCC (HYCC1 or HYCC2). Interacts with PI4KA, interaction is direct. Interacts with EFR3 (EFR3A or EFR3B), interaction is direct. Interacts with HYCC (HYCC1 or HYCC2), interaction is direct. Association with the PI4K complex is strongly reduced by TMEM150A.

It is found in the cytoplasm. It localises to the cytosol. The protein localises to the cell membrane. Its function is as follows. Component of a complex required to localize phosphatidylinositol 4-kinase (PI4K) to the plasma membrane. The complex acts as a regulator of phosphatidylinositol 4-phosphate (PtdIns(4)P) synthesis. In the complex, plays a central role in bridging PI4KA to EFR3B and HYCC1, via direct interactions. In Homo sapiens (Human), this protein is Tetratricopeptide repeat protein 7B (TTC7B).